A 200-amino-acid polypeptide reads, in one-letter code: Small ribosomal subunit protein uS4 (200 aa).

Residues 21 to 42 form a disordered region; it reads GTGKELQKRPYPPGQHGPGQRR. One can recognise an S4 RNA-binding domain in the interval 92-155; that stretch reads SRLDNLVYRL…RNLQVIKEAI (64 aa).

The protein belongs to the universal ribosomal protein uS4 family. As to quaternary structure, part of the 30S ribosomal subunit. Contacts protein S5. The interaction surface between S4 and S5 is involved in control of translational fidelity.

In terms of biological role, one of the primary rRNA binding proteins, it binds directly to 16S rRNA where it nucleates assembly of the body of the 30S subunit. Functionally, with S5 and S12 plays an important role in translational accuracy. In Geobacillus thermodenitrificans (strain NG80-2), this protein is Small ribosomal subunit protein uS4.